The sequence spans 666 residues: uncharacterized protein (666 aa).

In terms of domain architecture, RNB spans Arg-263–Arg-553.

This sequence belongs to the RNR ribonuclease family.

This is an uncharacterized protein from Synechocystis sp. (strain ATCC 27184 / PCC 6803 / Kazusa).